A 222-amino-acid polypeptide reads, in one-letter code: Pyridoxine/pyridoxamine 5'-phosphate oxidase (222 aa).

Residues 16 to 19 (RVSY) and Lys75 contribute to the substrate site. FMN-binding positions include 70-75 (RTVLCK), 85-86 (FT), Lys92, and Gln114. Positions 132, 136, and 140 each coordinate substrate. FMN-binding positions include 149–150 (QS) and Trp195. 201–203 (RLH) provides a ligand contact to substrate. Arg205 lines the FMN pocket.

Belongs to the pyridoxamine 5'-phosphate oxidase family. In terms of assembly, homodimer. It depends on FMN as a cofactor.

The catalysed reaction is pyridoxamine 5'-phosphate + O2 + H2O = pyridoxal 5'-phosphate + H2O2 + NH4(+). It catalyses the reaction pyridoxine 5'-phosphate + O2 = pyridoxal 5'-phosphate + H2O2. The protein operates within cofactor metabolism; pyridoxal 5'-phosphate salvage; pyridoxal 5'-phosphate from pyridoxamine 5'-phosphate: step 1/1. It participates in cofactor metabolism; pyridoxal 5'-phosphate salvage; pyridoxal 5'-phosphate from pyridoxine 5'-phosphate: step 1/1. Functionally, catalyzes the oxidation of either pyridoxine 5'-phosphate (PNP) or pyridoxamine 5'-phosphate (PMP) into pyridoxal 5'-phosphate (PLP). The protein is Pyridoxine/pyridoxamine 5'-phosphate oxidase of Saccharopolyspora erythraea (strain ATCC 11635 / DSM 40517 / JCM 4748 / NBRC 13426 / NCIMB 8594 / NRRL 2338).